A 733-amino-acid polypeptide reads, in one-letter code: uncharacterized protein (733 aa).

A helical transmembrane segment spans residues 174–194 (WAVMILASLRPELFGPIIIAG).

The protein resides in the membrane. This is an uncharacterized protein from Rhizobium meliloti (Ensifer meliloti).